A 248-amino-acid polypeptide reads, in one-letter code: Sugar fermentation stimulation protein homolog (248 aa).

The protein belongs to the SfsA family.

The sequence is that of Sugar fermentation stimulation protein homolog from Prochlorococcus marinus subsp. pastoris (strain CCMP1986 / NIES-2087 / MED4).